The following is a 346-amino-acid chain: Leucine zipper protein 2 (346 aa).

An N-terminal signal peptide occupies residues 1-17; that stretch reads MKFIGAVYLLFLLPALS. N-linked (GlcNAc...) asparagine glycans are attached at residues N19 and N131. Residues 41-209 adopt a coiled-coil conformation; it reads RHLSKTSKEL…QLKALKDTVH (169 aa). Residues 162 to 190 form a leucine-zipper region; the sequence is LRYGKKDLIFKGQQLMDLENKLKVAKDEL. 2 N-linked (GlcNAc...) asparagine glycosylation sites follow: N241 and N296. Residues 271-346 form a disordered region; the sequence is SAVMRRESTG…LKKTQSDKHN (76 aa). Residues 293 to 324 are compositionally biased toward polar residues; it reads CSHNQTESSSVMKKTFGHSQSKTPEQNGQGQA. Basic and acidic residues predominate over residues 326–346; that stretch reads TAEESVKTDGELKKTQSDKHN.

Its subcellular location is the secreted. This is Leucine zipper protein 2 (luzp2) from Danio rerio (Zebrafish).